Here is a 962-residue protein sequence, read N- to C-terminus: Protein lin-36 (962 aa).

Disordered regions lie at residues 1–53 (MSEE…ETEG) and 74–99 (TSSGEVLDESQVTPTKQASSSQPREE). The segment covering 23 to 40 (DSHVTVHSVEQDSQHSGE) has biased composition (basic and acidic residues). Residues 74–95 (TSSGEVLDESQVTPTKQASSSQ) are compositionally biased toward polar residues. Residues 161 to 249 (LTHKPCTVCN…IEAFGVPVAI (89 aa)) form a THAP-type zinc finger. Composition is skewed to basic and acidic residues over residues 452 to 472 (KAEESAQGTKEQESSQKKHAE) and 534 to 570 (SHEEEHDPTPESVEREPTVSPNDPRERLRLKERDEQF). Disordered regions lie at residues 452–575 (KAEE…KMVQ), 612–676 (IAAT…PEER), 744–788 (QEKG…SASS), and 932–962 (DPKWRELQQQQQQQQQQQEQFPGQGSSDSQQ). Low complexity predominate over residues 626-637 (SSEQTPEPTTSQ). The segment covering 647-658 (KTKESAVQKVEK) has biased composition (basic and acidic residues). Residues 939–951 (QQQQQQQQQQQEQ) show a composition bias toward low complexity. Residues 952 to 962 (FPGQGSSDSQQ) show a composition bias toward polar residues.

As to expression, expressed in vulval precursor P(3-8).p cells and their descendants, neurons of the head, tail and ventral cord, hypodermal and intestinal cells and germline cells.

The protein resides in the nucleus. Functionally, required to negatively regulate vulval development. Antagonizes Ras-mediated vulval induction. Acts cell autonomously. The polypeptide is Protein lin-36 (lin-36) (Caenorhabditis elegans).